A 274-amino-acid chain; its full sequence is Purine nucleoside phosphorylase 1 (274 aa).

Residues serine 29, histidine 60, 80 to 82 (RFH), and alanine 112 contribute to the phosphate site. The residue at position 29 (serine 29) is a Phosphoserine. Glutamate 192 serves as a coordination point for a purine D-ribonucleoside. Serine 211 is a phosphate binding site. A purine D-ribonucleoside is bound at residue asparagine 234.

The protein belongs to the PNP/MTAP phosphorylase family. Homotrimer.

The catalysed reaction is a purine D-ribonucleoside + phosphate = a purine nucleobase + alpha-D-ribose 1-phosphate. It catalyses the reaction a purine 2'-deoxy-D-ribonucleoside + phosphate = a purine nucleobase + 2-deoxy-alpha-D-ribose 1-phosphate. The protein operates within purine metabolism; purine nucleoside salvage. The purine nucleoside phosphorylases catalyze the phosphorolytic breakdown of the N-glycosidic bond in the beta-(deoxy)ribonucleoside molecules, with the formation of the corresponding free purine bases and pentose-1-phosphate. Cleaves guanosine, inosine, 2'-deoxyguanosine and 2'-deoxyinosine. The protein is Purine nucleoside phosphorylase 1 (punA) of Geobacillus stearothermophilus (Bacillus stearothermophilus).